The primary structure comprises 196 residues: Mitochondrial inner membrane protein SHH3 (196 aa).

A mitochondrion-targeting transit peptide spans methionine 1–lysine 53. Topologically, residues serine 54–serine 97 are mitochondrial matrix. Positions 91 and 95 each coordinate a ubiquinone. A helical membrane pass occupies residues glycine 98 to methionine 118. Residues glycine 119–lysine 137 are Mitochondrial intermembrane-facing. The helical transmembrane segment at tryptophan 138–arginine 160 threads the bilayer. A heme-binding site is contributed by histidine 154. Topologically, residues histidine 161 to glycine 174 are mitochondrial matrix. A helical membrane pass occupies residues valine 175 to alanine 195. A topological domain (mitochondrial intermembrane) is located at residue glutamine 196.

Belongs to the cytochrome b560 family.

It localises to the mitochondrion inner membrane. Functionally, homolog of SDH3, but seems not to be a stoichiometric subunit of either the succinate dehydrogenase (SDH) complex or the mitochondrial inner membrane translocase TIM22 complex. This is Mitochondrial inner membrane protein SHH3 from Saccharomyces cerevisiae (strain ATCC 204508 / S288c) (Baker's yeast).